An 85-amino-acid chain; its full sequence is Toxin BmKaTx10 (85 aa).

The first 19 residues, 1 to 19 (MNYLVMVSFALLLMTGVES), serve as a signal peptide directing secretion. An LCN-type CS-alpha/beta domain is found at 21-83 (RDGYIALPHN…VPIRVPGRCH (63 aa)). Cystine bridges form between cysteine 31-cysteine 82, cysteine 35-cysteine 55, cysteine 41-cysteine 65, and cysteine 45-cysteine 67.

Belongs to the long (4 C-C) scorpion toxin superfamily. Sodium channel inhibitor family. Alpha subfamily. As to expression, expressed by the venom gland.

It is found in the secreted. Alpha toxins bind voltage-independently at site-3 of sodium channels (Nav) and inhibit the inactivation of the activated channels, thereby blocking neuronal transmission. The polypeptide is Toxin BmKaTx10 (Olivierus martensii (Manchurian scorpion)).